The sequence spans 1390 residues: DNA-directed RNA polymerase subunit beta'' (1390 aa).

Cysteine 224, cysteine 295, cysteine 302, and cysteine 305 together coordinate Zn(2+).

This sequence belongs to the RNA polymerase beta' chain family. RpoC2 subfamily. As to quaternary structure, in plastids the minimal PEP RNA polymerase catalytic core is composed of four subunits: alpha, beta, beta', and beta''. When a (nuclear-encoded) sigma factor is associated with the core the holoenzyme is formed, which can initiate transcription. It depends on Zn(2+) as a cofactor.

It is found in the plastid. The protein localises to the chloroplast. The enzyme catalyses RNA(n) + a ribonucleoside 5'-triphosphate = RNA(n+1) + diphosphate. In terms of biological role, DNA-dependent RNA polymerase catalyzes the transcription of DNA into RNA using the four ribonucleoside triphosphates as substrates. The protein is DNA-directed RNA polymerase subunit beta'' of Daucus carota (Wild carrot).